A 331-amino-acid chain; its full sequence is LIM/homeobox protein Lhx9 (331 aa).

LIM zinc-binding domains lie at 71–132 and 133–194; these read TLCA…FSVK and RCAR…LVQG. The interval 253–275 is disordered; sequence ETDLDRDQTYPPSQKTKRMRTSF. The segment at residues 268–327 is a DNA-binding region (homeobox); it reads TKRMRTSFKHHQLRTMKSYFAINHNPDAKDLKQLAQKTGLTKRVLQGEQCSGFNSHTTRR.

Its subcellular location is the nucleus. Functionally, may be involved in gonadal development. The polypeptide is LIM/homeobox protein Lhx9 (lhx9) (Xenopus laevis (African clawed frog)).